An 809-amino-acid chain; its full sequence is MNKNGGPPVANITTSSTTITSTTTTQAKSQLPSSLSVNNLHTTQGSTDQPTILGVTEPISTAPPSSIDFKLSTELENTLISFNLFESPEESRKREEILGKLNQIVREWAKQVSLKKGYPEQTASEVVAKIFTFGSYRLGVHGPGSDIDTLCVGPKHIMRSDFFDDLSDILKVHPEITEFTTVKDAFVPVITMVFSGIPIDLIYAKLALTAIPEELNDLIDESFLKNIDEKSILSLNGCRVTDQILKLVPNIPNFRMALRCIKLWAIRRGIYSNILGFLGGVSWALLTARICQLYPNSAPSTIIHRFFKVYEIWKWPAPILLCHIQEGGILGPKVWNPKRDKAHLMPIITPAYPSMNSTYNVSKSTLQLMKSEFVRGAEITRKIETGECTWKNLLEKCDFFTRYSFYIEIDCYSMNEEDSRKWEGWIESKLRFLISNLESTPKMKFAVPYPKGFTNNLHKANNPDQICTSFFMGLSFNFSNTPGADKSVDLTKAVTEFTGIIKDWLRTQPNPDTMDIKVQYIKKKQLPAFVKDEGPEEPVKTTKKRSSTGEPSATRKKLKSENSDNKLNSPKSPITTNINSTPTTSTPTTTANTTTNTTTATTTTTTTTVPITSTPTSNISSPTMNSTELTTPTSTSTTTSNDSITTPPTTTTINSVQPPSAQPTENGSSTSNSPTSTSINNTALPPNPTTNSESTIETTITLPTTLESQTSTLKDSNEISTNGTAVATEPTITSPSVNINESSTSTSTTTTTTVTEQQIQTAPTTATPINKTIVNTMEVNELSFISSSSETSQSKPPPKKPTISIIRGN.

A disordered region spans residues Met-1–Pro-50. Positions Ile-12–Thr-25 are enriched in low complexity. Residues Gln-26–Pro-50 are compositionally biased toward polar residues. ATP contacts are provided by residues Phe-133 to Ser-135, Asp-146 to Asp-148, Asp-200, Lys-262, Tyr-271, and Gly-280 to Val-281. Positions 146, 148, and 200 each coordinate Mg(2+). 2 disordered regions span residues Phe-529–Gln-760 and Ile-785–Asn-809. Basic and acidic residues predominate over residues Val-530–Lys-540. The segment covering Ser-572 to Ser-655 has biased composition (low complexity). The segment covering Val-656–Glu-665 has biased composition (polar residues). The span at Asn-666 to Leu-706 shows a compositional bias: low complexity. A compositionally biased stretch (polar residues) spans Glu-707–Pro-735. 2 stretches are compositionally biased toward low complexity: residues Ser-736 to Gln-760 and Ile-785 to Ser-794.

This sequence belongs to the poly(A) polymerase family. The cofactor is Mg(2+). Requires Mn(2+) as cofactor.

Its subcellular location is the nucleus. The catalysed reaction is RNA(n) + ATP = RNA(n)-3'-adenine ribonucleotide + diphosphate. In terms of biological role, polymerase that creates the 3'-poly(A) tail of mRNA's. May acquire specificity through interaction with a cleavage and polyadenylation factor. The sequence is that of Poly(A) polymerase (papA) from Dictyostelium discoideum (Social amoeba).